Consider the following 316-residue polypeptide: L-lactate dehydrogenase (316 aa).

Residues 13–15, 34–36, Tyr67, and 79–83 contribute to the NAD(+) site; these read GMI, FDI, and TAGFT. Arg95 serves as a coordination point for substrate. NAD(+)-binding positions include 125–127, Leu150, and Leu154; that span reads VTN. Arg158 and His182 together coordinate substrate. Residue His182 participates in NAD(+) binding. Residue His182 is the Proton acceptor of the active site.

This sequence belongs to the LDH/MDH superfamily. LDH family. Homotetramer.

The enzyme catalyses (S)-lactate + NAD(+) = pyruvate + NADH + H(+). It functions in the pathway fermentation; pyruvate fermentation to lactate; (S)-lactate from pyruvate: step 1/1. The protein is L-lactate dehydrogenase of Plasmodium berghei.